A 222-amino-acid chain; its full sequence is 7-cyano-7-deazaguanine synthase (222 aa).

14-24 (FSGGQDSTTCL) serves as a coordination point for ATP. Zn(2+)-binding residues include Cys-190, Cys-199, Cys-202, and Cys-205.

It belongs to the QueC family. As to quaternary structure, homodimer. Zn(2+) is required as a cofactor.

The catalysed reaction is 7-carboxy-7-deazaguanine + NH4(+) + ATP = 7-cyano-7-deazaguanine + ADP + phosphate + H2O + H(+). It functions in the pathway purine metabolism; 7-cyano-7-deazaguanine biosynthesis. Functionally, catalyzes the ATP-dependent conversion of 7-carboxy-7-deazaguanine (CDG) to 7-cyano-7-deazaguanine (preQ(0)). The protein is 7-cyano-7-deazaguanine synthase of Staphylococcus aureus (strain Mu3 / ATCC 700698).